A 502-amino-acid chain; its full sequence is Cytochrome P450 71B17 (502 aa).

Residues 1 to 21 (MAISLLCLFLITFVSLTIVGC) traverse the membrane as a helical segment. A heme-binding site is contributed by Cys-444.

This sequence belongs to the cytochrome P450 family. The cofactor is heme.

Its subcellular location is the membrane. The protein is Cytochrome P450 71B17 (CYP71B17) of Arabidopsis thaliana (Mouse-ear cress).